A 121-amino-acid polypeptide reads, in one-letter code: Small ribosomal subunit protein uS13 (121 aa).

The disordered stretch occupies residues 91 to 121 (HRRGLPVRGQNSKNNARTRKGPRRTVANKKK). Residues 106–121 (ARTRKGPRRTVANKKK) show a composition bias toward basic residues.

It belongs to the universal ribosomal protein uS13 family. As to quaternary structure, part of the 30S ribosomal subunit. Forms a loose heterodimer with protein S19. Forms two bridges to the 50S subunit in the 70S ribosome.

Located at the top of the head of the 30S subunit, it contacts several helices of the 16S rRNA. In the 70S ribosome it contacts the 23S rRNA (bridge B1a) and protein L5 of the 50S subunit (bridge B1b), connecting the 2 subunits; these bridges are implicated in subunit movement. Contacts the tRNAs in the A and P-sites. This chain is Small ribosomal subunit protein uS13, found in Bacillus cereus (strain G9842).